We begin with the raw amino-acid sequence, 293 residues long: 33 kDa chaperonin (293 aa).

Disulfide bonds link cysteine 237-cysteine 239 and cysteine 271-cysteine 274.

Belongs to the HSP33 family. Under oxidizing conditions two disulfide bonds are formed involving the reactive cysteines. Under reducing conditions zinc is bound to the reactive cysteines and the protein is inactive.

The protein localises to the cytoplasm. Redox regulated molecular chaperone. Protects both thermally unfolding and oxidatively damaged proteins from irreversible aggregation. Plays an important role in the bacterial defense system toward oxidative stress. This chain is 33 kDa chaperonin, found in Haemophilus influenzae (strain ATCC 51907 / DSM 11121 / KW20 / Rd).